We begin with the raw amino-acid sequence, 692 residues long: A-type ATP synthase subunit I (692 aa).

Transmembrane regions (helical) follow at residues 389 to 409 (GIML…LFIW), 422 to 442 (LGYI…ITGG), 494 to 514 (ILVF…FVGF), 531 to 551 (GVWI…FAGA), 553 to 573 (TMIA…ASMY), 602 to 622 (ARLL…NIMA), and 624 to 644 (LVGE…LLVG).

Belongs to the V-ATPase 116 kDa subunit family. In terms of assembly, the A-type ATPase is composed of subunits A(3), B(3), C, D, E(1 or 2), F, H(2), I and K(x).

The protein resides in the cell membrane. Its function is as follows. Component of the A-type ATP synthase that produces ATP from ADP in the presence of a proton gradient across the membrane. This is A-type ATP synthase subunit I from Methanocaldococcus jannaschii (strain ATCC 43067 / DSM 2661 / JAL-1 / JCM 10045 / NBRC 100440) (Methanococcus jannaschii).